Consider the following 232-residue polypeptide: Large ribosomal subunit protein uL1 (232 aa).

It belongs to the universal ribosomal protein uL1 family. As to quaternary structure, part of the 50S ribosomal subunit.

Functionally, binds directly to 23S rRNA. The L1 stalk is quite mobile in the ribosome, and is involved in E site tRNA release. Its function is as follows. Protein L1 is also a translational repressor protein, it controls the translation of the L11 operon by binding to its mRNA. This Chlamydia abortus (strain DSM 27085 / S26/3) (Chlamydophila abortus) protein is Large ribosomal subunit protein uL1.